Reading from the N-terminus, the 148-residue chain is MNLSNLKPAEGSTKTRKRIGRGPGSGLGGTSTRGHKGAKSRSGYSKKIGFEGGQMPLQRRVPKFGFKNINRIEYKAINLETIQKLAEAKKLEKVGVNDFIEAGFISSSQLVKVLGNGTLTAKLSVEAHAFSKSAVAAIEAAGGNVVKL.

The interval 1–50 (MNLSNLKPAEGSTKTRKRIGRGPGSGLGGTSTRGHKGAKSRSGYSKKIGF) is disordered. Gly residues predominate over residues 21–31 (RGPGSGLGGTS).

It belongs to the universal ribosomal protein uL15 family. Part of the 50S ribosomal subunit.

Its function is as follows. Binds to the 23S rRNA. This chain is Large ribosomal subunit protein uL15, found in Bacteroides fragilis (strain ATCC 25285 / DSM 2151 / CCUG 4856 / JCM 11019 / LMG 10263 / NCTC 9343 / Onslow / VPI 2553 / EN-2).